The chain runs to 210 residues: 7-carboxy-7-deazaguanine synthase (210 aa).

Substrate-binding positions include 12 to 14 (LQG) and arginine 27. The Radical SAM core domain maps to 18-210 (QAGRAAVFCR…LQTHKYIGIP (193 aa)). The [4Fe-4S] cluster site is built by cysteine 31, cysteine 46, and cysteine 49. Threonine 51 provides a ligand contact to Mg(2+). Threonine 90 is a substrate binding site. S-adenosyl-L-methionine is bound by residues glycine 92, 133-135 (SPK), and 173-176 (QPMD). Proline 210 contributes to the substrate binding site.

It belongs to the radical SAM superfamily. 7-carboxy-7-deazaguanine synthase family. In terms of assembly, homodimer. It depends on [4Fe-4S] cluster as a cofactor. The cofactor is S-adenosyl-L-methionine. Mg(2+) is required as a cofactor.

It catalyses the reaction 6-carboxy-5,6,7,8-tetrahydropterin + H(+) = 7-carboxy-7-deazaguanine + NH4(+). It functions in the pathway purine metabolism; 7-cyano-7-deazaguanine biosynthesis. Catalyzes the complex heterocyclic radical-mediated conversion of 6-carboxy-5,6,7,8-tetrahydropterin (CPH4) to 7-carboxy-7-deazaguanine (CDG), a step common to the biosynthetic pathways of all 7-deazapurine-containing compounds. This Bordetella pertussis (strain Tohama I / ATCC BAA-589 / NCTC 13251) protein is 7-carboxy-7-deazaguanine synthase.